A 328-amino-acid polypeptide reads, in one-letter code: Gonadotropin-releasing hormone receptor (328 aa).

The Extracellular portion of the chain corresponds to 1-38; that stretch reads MANSDSPEQNENHCSAINSSIPLTPGSLPTLTLSGKIR. Asparagine 18 is a glycosylation site (N-linked (GlcNAc...) asparagine). Residues 39–58 traverse the membrane as a helical segment; sequence VTVTFFLFLLSTIFNTSFLL. The Cytoplasmic segment spans residues 59-77; that stretch reads KLQNWTQRKEKRKKLSRMK. Residues 78-97 traverse the membrane as a helical segment; it reads LLLKHLTLANLLETLIVMPL. The Extracellular segment spans residues 98-115; it reads DGMWNITVQWYAGELLCK. Asparagine 102 carries N-linked (GlcNAc...) asparagine glycosylation. A disulfide bridge connects residues cysteine 114 and cysteine 196. The chain crosses the membrane as a helical span at residues 116–137; the sequence is VLSYLKLFSMYAPAFMMVVISL. The Cytoplasmic portion of the chain corresponds to 138–164; sequence DRSLAITKPLAVKSNSKLGQFMIGLAW. Residues 165–184 traverse the membrane as a helical segment; it reads LLSSIFAGPQLYIFGMIHLA. The Extracellular portion of the chain corresponds to 185-212; that stretch reads DDSGQTEGFSQCVTHCSFPQWWHQAFYN. A helical membrane pass occupies residues 213-232; the sequence is FFTFSCLFIIPLLIMVICNA. Residues 233-281 are Cytoplasmic-facing; that stretch reads KIIFTLTRVLHQDPHKLQLNQSKNNIPRARLRTLKMTVAFATSFTVCWT. Residues 282–300 form a helical membrane-spanning segment; the sequence is PYYVLGIWYWFDPDMVNRV. Residues 301–306 lie on the Extracellular side of the membrane; that stretch reads SDPVNH. The chain crosses the membrane as a helical span at residues 307-326; that stretch reads FFFLFAFLNPCFDPLIYGYF. The Cytoplasmic portion of the chain corresponds to 327–328; it reads SL.

Belongs to the G-protein coupled receptor 1 family.

Its subcellular location is the cell membrane. Receptor for gonadotropin releasing hormone (GnRH) that mediates the action of GnRH to stimulate the secretion of the gonadotropic hormones luteinizing hormone (LH) and follicle-stimulating hormone (FSH). This receptor mediates its action by association with G-proteins that activate a phosphatidylinositol-calcium second messenger system. The sequence is that of Gonadotropin-releasing hormone receptor (GNRHR) from Bos taurus (Bovine).